The chain runs to 435 residues: Enolase (435 aa).

Gln163 provides a ligand contact to (2R)-2-phosphoglycerate. Glu205 (proton donor) is an active-site residue. Mg(2+) is bound by residues Asp243, Glu292, and Asp319. (2R)-2-phosphoglycerate-binding residues include Lys344, Arg373, Ser374, and Lys395. Lys344 functions as the Proton acceptor in the catalytic mechanism.

The protein belongs to the enolase family. The cofactor is Mg(2+).

It localises to the cytoplasm. The protein resides in the secreted. Its subcellular location is the cell surface. It carries out the reaction (2R)-2-phosphoglycerate = phosphoenolpyruvate + H2O. Its pathway is carbohydrate degradation; glycolysis; pyruvate from D-glyceraldehyde 3-phosphate: step 4/5. Catalyzes the reversible conversion of 2-phosphoglycerate (2-PG) into phosphoenolpyruvate (PEP). It is essential for the degradation of carbohydrates via glycolysis. This chain is Enolase, found in Streptococcus pyogenes serotype M12 (strain MGAS2096).